Consider the following 506-residue polypeptide: Transcription factor CP2 (506 aa).

Residues 61 to 300 enclose the Grh/CP2 DB domain; the sequence is ENKILPFQYV…SPGFNSSHNS (240 aa). The interval 133 to 395 is DNA-binding; the sequence is EHQQLEGWRW…LFNALKGRIV (263 aa). Disordered stretches follow at residues 238 to 268 and 291 to 316; these read FKPK…YQPS and SPGF…QPEP. Residues 241–265 show a composition bias toward basic and acidic residues; sequence KGADRKQKTDREKMEKRTPQEKEKY. Over residues 291-300 the composition is skewed to polar residues; the sequence is SPGFNSSHNS.

This sequence belongs to the grh/CP2 family. CP2 subfamily. Component of the SSP (stage selector protein) complex, which appears to be a heteromer of TFCP2 and 2 copies of NFE4.

The protein resides in the nucleus. May function as a transcription factor. The protein is Transcription factor CP2 (tfcp2) of Xenopus laevis (African clawed frog).